The primary structure comprises 461 residues: Argininosuccinate lyase (461 aa).

It belongs to the lyase 1 family. Argininosuccinate lyase subfamily.

The protein resides in the cytoplasm. The catalysed reaction is 2-(N(omega)-L-arginino)succinate = fumarate + L-arginine. Its pathway is amino-acid biosynthesis; L-arginine biosynthesis; L-arginine from L-ornithine and carbamoyl phosphate: step 3/3. This chain is Argininosuccinate lyase, found in Streptococcus thermophilus (strain CNRZ 1066).